The primary structure comprises 70 residues: MARVTVEDCLENVDNRFQLVMLATKRARQIATKGAEPMVAEENDKPTVIALREIAEGKVTRDLLLEEDDD.

Belongs to the RNA polymerase subunit omega family. In terms of assembly, the RNAP catalytic core consists of 2 alpha, 1 beta, 1 beta' and 1 omega subunit. When a sigma factor is associated with the core the holoenzyme is formed, which can initiate transcription.

The catalysed reaction is RNA(n) + a ribonucleoside 5'-triphosphate = RNA(n+1) + diphosphate. Its function is as follows. Promotes RNA polymerase assembly. Latches the N- and C-terminal regions of the beta' subunit thereby facilitating its interaction with the beta and alpha subunits. The protein is DNA-directed RNA polymerase subunit omega of Marinobacter nauticus (strain ATCC 700491 / DSM 11845 / VT8) (Marinobacter aquaeolei).